A 412-amino-acid chain; its full sequence is NAD-dependent dihydropyrimidine dehydrogenase subunit PreT (412 aa).

An NAD(+)-binding site is contributed by Glu286.

The protein belongs to the NADH dehydrogenase family. In terms of assembly, heterotetramer of 2 PreA and 2 PreT subunits.

It carries out the reaction 5,6-dihydrouracil + NAD(+) = uracil + NADH + H(+). It catalyses the reaction 5,6-dihydrothymine + NAD(+) = thymine + NADH + H(+). Its function is as follows. Involved in pyrimidine base degradation. Catalyzes physiologically the reduction of uracil to 5,6-dihydrouracil (DHU) by using NADH as a specific cosubstrate. It also catalyzes the reverse reaction and the reduction of thymine to 5,6-dihydrothymine (DHT). In Escherichia coli (strain K12), this protein is NAD-dependent dihydropyrimidine dehydrogenase subunit PreT (preT).